The primary structure comprises 180 residues: Flavodoxin B (180 aa).

One can recognise a Flavodoxin-like domain in the interval 4-173 (IGLFFGSNTG…RVAAWLAQIA (170 aa)).

The protein belongs to the flavodoxin family. FMN serves as cofactor.

Its function is as follows. Low-potential electron donor to a number of redox enzymes. NifF is the electron donor to nitrogenase. This chain is Flavodoxin B (nifF), found in Azotobacter chroococcum mcd 1.